The following is a 119-amino-acid chain: Beta-2-microglobulin (119 aa).

The signal sequence occupies residues 1–20; the sequence is MGRFVAVALLVLLSLSGLET. The Ig-like C1-type domain maps to 25 to 114; that stretch reads PKIQVYSRHP…VTFSTPKTVK (90 aa). An intrachain disulfide couples Cys-45 to Cys-100.

It belongs to the beta-2-microglobulin family. Heterodimer of an alpha chain and a beta chain. Beta-2-microglobulin is the beta-chain of major histocompatibility complex class I molecules.

It localises to the secreted. Its function is as follows. Component of the class I major histocompatibility complex (MHC). Involved in the presentation of peptide antigens to the immune system. The polypeptide is Beta-2-microglobulin (B2M) (Callicebus personatus nigrifrons (Black-fronted titi)).